We begin with the raw amino-acid sequence, 376 residues long: Chaperone protein DnaJ (376 aa).

Residues 4–70 (DYYQILGVSK…QKRAAYDRFG (67 aa)) form the J domain. The CR-type zinc finger occupies 139 to 217 (GVEKNISFSS…CHGLGRYHKQ (79 aa)). Zn(2+) is bound by residues C152, C155, C169, C172, C191, C194, C205, and C208. CXXCXGXG motif repeat units lie at residues 152-159 (CDTCHGSG), 169-176 (CDACGGVG), 191-198 (CHKCQGNG), and 205-212 (CKKCHGLG).

The protein belongs to the DnaJ family. Homodimer. It depends on Zn(2+) as a cofactor.

The protein resides in the cytoplasm. In terms of biological role, participates actively in the response to hyperosmotic and heat shock by preventing the aggregation of stress-denatured proteins and by disaggregating proteins, also in an autonomous, DnaK-independent fashion. Unfolded proteins bind initially to DnaJ; upon interaction with the DnaJ-bound protein, DnaK hydrolyzes its bound ATP, resulting in the formation of a stable complex. GrpE releases ADP from DnaK; ATP binding to DnaK triggers the release of the substrate protein, thus completing the reaction cycle. Several rounds of ATP-dependent interactions between DnaJ, DnaK and GrpE are required for fully efficient folding. Also involved, together with DnaK and GrpE, in the DNA replication of plasmids through activation of initiation proteins. This is Chaperone protein DnaJ from Rickettsia bellii (strain OSU 85-389).